The primary structure comprises 388 residues: Chorismate synthase (388 aa).

2 residues coordinate NADP(+): arginine 39 and arginine 45. The segment at 95-118 is disordered; the sequence is EKNEKSRRVSRPRPGHADLVGGMK. Residues 130-132, 251-252, glycine 296, 311-315, and arginine 337 contribute to the FMN site; these read RSS, NA, and KPIPT.

It belongs to the chorismate synthase family. In terms of assembly, homotetramer. It depends on FMNH2 as a cofactor.

It carries out the reaction 5-O-(1-carboxyvinyl)-3-phosphoshikimate = chorismate + phosphate. Its pathway is metabolic intermediate biosynthesis; chorismate biosynthesis; chorismate from D-erythrose 4-phosphate and phosphoenolpyruvate: step 7/7. Its function is as follows. Catalyzes the anti-1,4-elimination of the C-3 phosphate and the C-6 proR hydrogen from 5-enolpyruvylshikimate-3-phosphate (EPSP) to yield chorismate, which is the branch point compound that serves as the starting substrate for the three terminal pathways of aromatic amino acid biosynthesis. This reaction introduces a second double bond into the aromatic ring system. The polypeptide is Chorismate synthase (Listeria innocua serovar 6a (strain ATCC BAA-680 / CLIP 11262)).